The sequence spans 513 residues: Sugar transport protein MST8 (513 aa).

Residues 1-17 (MAGGAMTDTDGAHKNYP) lie on the Cytoplasmic side of the membrane. A helical membrane pass occupies residues 18-38 (GKMTIFVFLACLVASSGGLIF). Topologically, residues 39 to 81 (GYDIGISGGVTSMDSFLIKFFPSVYAKEKEMVETNQYCKFDSE) are extracellular. Residues 82 to 102 (LLTLFTSSLYLAALIASLFAS) form a helical membrane-spanning segment. Residues 103–116 (VITRKFGRRITMLG) lie on the Cytoplasmic side of the membrane. A helical membrane pass occupies residues 117–137 (GGVIFLVGAILNGAAADVAML). Residues 138–139 (II) are Extracellular-facing. Residues 140–160 (GRILLGIGVGFSNQAVPLYLS) form a helical membrane-spanning segment. Over 161–166 (EMAPAR) the chain is Cytoplasmic. The chain crosses the membrane as a helical span at residues 167-187 (MRGMLNISFQLMITVGILAAN). Residues 188–201 (LINYFTDKIAGGWG) are Extracellular-facing. The helical transmembrane segment at 202-222 (WRVSLGLAAVPAVIMAGGSLF) threads the bilayer. At 223 to 294 (LPDTPNSLLS…LVMSVLIPTL (72 aa)) the chain is on the cytoplasmic side. The helical transmembrane segment at 295–315 (QQLTGINVVMFYAPVLFKTIG) threads the bilayer. Residues 316-320 (FGGTA) are Extracellular-facing. Residues 321–341 (SLMSAVITGLVNMFATFVSIA) traverse the membrane as a helical segment. Topologically, residues 342–347 (TVDRLG) are cytoplasmic. A helical membrane pass occupies residues 348-368 (RRKLLLQGGVQMIFAQFILGT). The Extracellular portion of the chain corresponds to 369 to 385 (LIAVKFGTAGVANISRG). A helical membrane pass occupies residues 386–406 (YAIVVVLCICVFVSAFAWSWG). Residues 407–425 (PLGWLVPSEIFPLEIRSAA) are Cytoplasmic-facing. Residues 426–446 (QSVVVVFNMAFTFIIAQIFLM) form a helical membrane-spanning segment. Residues 447–450 (MLCH) lie on the Extracellular side of the membrane. The helical transmembrane segment at 451–471 (LKFGLFYFFGAMELIMTGFVF) threads the bilayer. The Cytoplasmic portion of the chain corresponds to 472 to 512 (FFLPETKGIPIEEMDRIWGKHWYWRRFVGAGAGGKVEITST).

The protein belongs to the major facilitator superfamily. Sugar transporter (TC 2.A.1.1) family. Expressed specifically in anthers.

The protein resides in the membrane. Its function is as follows. Mediates active uptake of hexoses by sugar:proton symport. May play an important role in transporting monosaccharides during anther development. This Oryza sativa subsp. japonica (Rice) protein is Sugar transport protein MST8.